We begin with the raw amino-acid sequence, 723 residues long: Aspartate--tRNA(Asp/Asn) ligase 1 (723 aa).

Position 206 (glutamate 206) interacts with L-aspartate. The interval 230-233 (QLFK) is aspartate. Arginine 252 is an L-aspartate binding site. Residues 252-254 (RDE) and glutamine 261 contribute to the ATP site. Histidine 481 lines the L-aspartate pocket. Glutamate 516 contacts ATP. Arginine 523 contacts L-aspartate. Residue 568 to 571 (GMDR) coordinates ATP.

This sequence belongs to the class-II aminoacyl-tRNA synthetase family. Type 1 subfamily. Homodimer.

Its subcellular location is the cytoplasm. It catalyses the reaction tRNA(Asx) + L-aspartate + ATP = L-aspartyl-tRNA(Asx) + AMP + diphosphate. Aspartyl-tRNA synthetase with relaxed tRNA specificity since it is able to aspartylate not only its cognate tRNA(Asp) but also tRNA(Asn). Reaction proceeds in two steps: L-aspartate is first activated by ATP to form Asp-AMP and then transferred to the acceptor end of tRNA(Asp/Asn). The chain is Aspartate--tRNA(Asp/Asn) ligase 1 from Syntrophus aciditrophicus (strain SB).